A 315-amino-acid chain; its full sequence is Ribosomal RNA small subunit methyltransferase H (315 aa).

S-adenosyl-L-methionine contacts are provided by residues G35–H37, D55, F80, D102, and Q109.

This sequence belongs to the methyltransferase superfamily. RsmH family.

The protein localises to the cytoplasm. It catalyses the reaction cytidine(1402) in 16S rRNA + S-adenosyl-L-methionine = N(4)-methylcytidine(1402) in 16S rRNA + S-adenosyl-L-homocysteine + H(+). Functionally, specifically methylates the N4 position of cytidine in position 1402 (C1402) of 16S rRNA. This chain is Ribosomal RNA small subunit methyltransferase H, found in Buchnera aphidicola subsp. Baizongia pistaciae (strain Bp).